Reading from the N-terminus, the 492-residue chain is Spindle assembly abnormal protein 6 (492 aa).

The PISA domain maps to 46-98 (SGEKELKFEISRSDDFEFLFSETLNNEKYQILARDHDLTVDFDAFPKVIIQHL). Residues 192–407 (KSADELASLR…KIAHYRAQRF (216 aa)) are a coiled coil.

In terms of assembly, nine homodimers form a cartwheel structure with an internal diameter of 23 nM and radial spokes connecting to the microtubule triplets. Interacts with sas-5.

It is found in the cytoplasm. The protein resides in the cytoskeleton. It localises to the microtubule organizing center. Its subcellular location is the centrosome. The protein localises to the centriole. Its function is as follows. Central scaffolding component of the centrioles ensuring their 9-fold symmetry. Required for centrosome biogenesis and duplication. The polypeptide is Spindle assembly abnormal protein 6 (Caenorhabditis elegans).